A 930-amino-acid polypeptide reads, in one-letter code: MKLKDTLNLGKTEFPMRAGLPTKEPVWQKEWEDAKLYQRRQELNQGKPHFTLHDGPPYANGNIHVGHAMNKISKDIIVRSKSMSGFYAPFIPGWDTHGLPIEQVLSKQGVKRKEMDLVEYLKLCREYALSQVDKQREDFKRLGVSGDWENPYVTLTPDYEAAQIRVFGEMANKGYIYRGAKPVYWSWSSESALAEAEIEYHDLVSTSLYYANKVKDGKGVLDTDTYIVVWTTTPFTITASRGLTVGADIDYVLVQPAGEARKFVVAAELLTSLSEKFGWADVQVLETYRGQELNHIVTEHPWDTAVEELVILGDHVTTDSGTGIVHTAPGFGEDDYNVGIANNLEVAVTVDERGIMMKNAGPEFEGQFYEKVVPTVIEKLGNLLLAQEEISHSYPFDWRTKKPIIWRAVPQWFASVSKFRQEILDEIEKVKFHSEWGKVRLYNMIRDRGDWVISRQRAWGVPLPIFYAEDGTAIMVAETIEHVAQLFEEHGSSIWWERDAKDLLPEGFTHPGSPNGEFKKETDIMDVWFDSGSSWNGVVVNRPELTYPADLYLEGSDQYRGWFNSSLITSVANHGVAPYKQILSQGFALDGKGEKMSKSLGNTIAPSDVEKQFGAEILRLWVTSVDSSNDVRISMDILSQVSETYRKIRNTLRFLIANTSDFNPAQDTVAYDELRSVDKYMTIRFNQLVKTIRDAYADFEFLTIYKALVNFINVDLSAFYLDFAKDVVYIEGAKSLERRQMQTVFYDILVKITKLLTPILPHTAEEIWSYLEFETEDFVQLSELPEVQTFANQEEILDTWAAFMDFRGQAQKALEEARNAKVIGKSLEAHLTVYPNEVVKTLLEAVNSNVAQLLIVSELTIAEGPAPEAALSFEDVAFTVERAAGEVCDRCRRIDPTTAERSYQAVICDHCASIVEENFAEAVAEGFEEK.

A 'HIGH' region motif is present at residues 57–67 (PYANGNIHVGH). An L-isoleucyl-5'-AMP-binding site is contributed by E554. Residues 595-599 (KMSKS) carry the 'KMSKS' region motif. K598 lines the ATP pocket. Positions 888, 891, 908, and 911 each coordinate Zn(2+).

It belongs to the class-I aminoacyl-tRNA synthetase family. IleS type 1 subfamily. As to quaternary structure, monomer. Requires Zn(2+) as cofactor.

It is found in the cytoplasm. The enzyme catalyses tRNA(Ile) + L-isoleucine + ATP = L-isoleucyl-tRNA(Ile) + AMP + diphosphate. Functionally, catalyzes the attachment of isoleucine to tRNA(Ile). As IleRS can inadvertently accommodate and process structurally similar amino acids such as valine, to avoid such errors it has two additional distinct tRNA(Ile)-dependent editing activities. One activity is designated as 'pretransfer' editing and involves the hydrolysis of activated Val-AMP. The other activity is designated 'posttransfer' editing and involves deacylation of mischarged Val-tRNA(Ile). The sequence is that of Isoleucine--tRNA ligase from Streptococcus pneumoniae (strain JJA).